We begin with the raw amino-acid sequence, 104 residues long: MYAVIKTGGKQYRVQEGDTLRVEKINADEGATITLDEVLLVANEDNIQVGAPYIEGGKVSATVKTHGRGEKIRIIKLRRRKHHRKRMGHRQYFTELHIDNISTG.

This sequence belongs to the bacterial ribosomal protein bL21 family. In terms of assembly, part of the 50S ribosomal subunit. Contacts protein L20.

This protein binds to 23S rRNA in the presence of protein L20. This chain is Large ribosomal subunit protein bL21, found in Nitrosococcus oceani (strain ATCC 19707 / BCRC 17464 / JCM 30415 / NCIMB 11848 / C-107).